Reading from the N-terminus, the 296-residue chain is Cytidine deaminase (296 aa).

CMP/dCMP-type deaminase domains lie at 47-167 and 186-296; these read TEAE…FGPK and DSSD…VDPV. A substrate-binding site is contributed by 88–90; that stretch reads NLE. Position 101 (H101) interacts with Zn(2+). Catalysis depends on E103, which acts as the Proton donor. Residues C128 and C131 each contribute to the Zn(2+) site.

The protein belongs to the cytidine and deoxycytidylate deaminase family. In terms of assembly, homodimer. The cofactor is Zn(2+).

The catalysed reaction is cytidine + H2O + H(+) = uridine + NH4(+). The enzyme catalyses 2'-deoxycytidine + H2O + H(+) = 2'-deoxyuridine + NH4(+). In terms of biological role, this enzyme scavenges exogenous and endogenous cytidine and 2'-deoxycytidine for UMP synthesis. This chain is Cytidine deaminase, found in Shewanella sp. (strain MR-7).